Consider the following 272-residue polypeptide: Methylesterase 8 (272 aa).

The active-site Acyl-ester intermediate is the S102. Residues D222 and H250 each act as charge relay system in the active site.

This sequence belongs to the AB hydrolase superfamily. Methylesterase family.

In terms of biological role, methylesterase shown to have carboxylesterase activity in vitro. The sequence is that of Methylesterase 8 from Arabidopsis thaliana (Mouse-ear cress).